The sequence spans 191 residues: UPF0669 protein C6orf120 (191 aa).

The first 30 residues, 1-30 (MAAPRGRAAPWTTALLLLLASQVLSPGSCA), serve as a signal peptide directing secretion. Asn53 is a glycosylation site (N-linked (GlcNAc...) asparagine).

It belongs to the UPF0669 family. In terms of tissue distribution, mainly expressed in hepatocytes and some weak expression in germinal center cells of lymph nodes.

Its subcellular location is the secreted. May be involved in induction of apoptosis in CD4(+) T-cells, but not CD8(+) T-cells or hepatocytes. This chain is UPF0669 protein C6orf120 (C6orf120), found in Homo sapiens (Human).